Reading from the N-terminus, the 740-residue chain is 1,4-alpha-glucan branching enzyme GlgB (740 aa).

The active-site Nucleophile is the Asp-414. Catalysis depends on Glu-467, which acts as the Proton donor.

It belongs to the glycosyl hydrolase 13 family. GlgB subfamily. As to quaternary structure, monomer.

It catalyses the reaction Transfers a segment of a (1-&gt;4)-alpha-D-glucan chain to a primary hydroxy group in a similar glucan chain.. The protein operates within glycan biosynthesis; glycogen biosynthesis. Its function is as follows. Catalyzes the formation of the alpha-1,6-glucosidic linkages in glycogen by scission of a 1,4-alpha-linked oligosaccharide from growing alpha-1,4-glucan chains and the subsequent attachment of the oligosaccharide to the alpha-1,6 position. This is 1,4-alpha-glucan branching enzyme GlgB from Rhodospirillum rubrum (strain ATCC 11170 / ATH 1.1.1 / DSM 467 / LMG 4362 / NCIMB 8255 / S1).